The sequence spans 242 residues: Ferritin, mitochondrial (242 aa).

Residues 1-49 (MLPCSLFLPKHISTSLVFLRSARHGFALLPRWVPRLSSDYPPAAPIRLL) constitute a mitochondrion transit peptide. Residues 70–219 (QNFHPDSEAA…DHVNNLVKMG (150 aa)) form the Ferritin-like diiron domain. 5 residues coordinate Fe cation: Glu87, Glu122, His125, Glu167, and Gln201.

This sequence belongs to the ferritin family. In terms of assembly, homooligomer of 24 subunits. The functional molecule is roughly spherical and contains a central cavity into which the polymeric mineral iron core is deposited.

The protein localises to the mitochondrion. It carries out the reaction 4 Fe(2+) + O2 + 4 H(+) = 4 Fe(3+) + 2 H2O. In terms of biological role, catalyzes the oxidation of ferrous iron(II) to ferric iron(III) and stores iron in a soluble, non-toxic, readily available form. Important for iron homeostasis. Iron is taken up in the ferrous form and deposited as ferric hydroxides after oxidation. This is Ferritin, mitochondrial from Bos taurus (Bovine).